Consider the following 377-residue polypeptide: MLSNFLKVNSKALGHIRTFASKSGEIKHNFKKADTYLCDGPSDSTVTNKDELISFFTEMSRFRRLETVCDGLYKKKLIRGFCHLYTGQEAVCAGLESAITKDDHIITAYRDHTYMLSRGATPEEIFAELLMKETGCSKGKGGSMHMFTKNFYGGNGIVGAQCPLGAGIAFAQKYNKTGNVCLAMYGDGAANQGQLFEAFNMASLWKLPVIFICENNKYGMGTSQKRSTAGHDFYTRGHYVAGLKVDGMDVFAVKEAGKYAAEWCRAGNGPIILEMDTYRYVGHSMSDPGITYRTREEVNHVRQTRDPIENIRQIILDNKIATEDQLAAIEETVRDEMEKASEKAIAAPLPQARELFTNVYLQEVPVRGVEFVNSFKP.

A mitochondrion-targeting transit peptide spans 1-26; that stretch reads MLSNFLKVNSKALGHIRTFASKSGEI. Residues histidine 83, tyrosine 109, arginine 110, glycine 156, valine 158, aspartate 187, glycine 188, alanine 189, asparagine 216, and tyrosine 218 each coordinate pyruvate. Tyrosine 109, arginine 110, glycine 156, valine 158, aspartate 187, glycine 188, alanine 189, and asparagine 216 together coordinate thiamine diphosphate. Residue aspartate 187 participates in Mg(2+) binding. Asparagine 216 and tyrosine 218 together coordinate Mg(2+). Residue histidine 283 coordinates thiamine diphosphate.

As to quaternary structure, tetramer of 2 alpha and 2 beta subunits. It depends on thiamine diphosphate as a cofactor. Mg(2+) serves as cofactor.

It is found in the mitochondrion matrix. It catalyses the reaction N(6)-[(R)-lipoyl]-L-lysyl-[protein] + pyruvate + H(+) = N(6)-[(R)-S(8)-acetyldihydrolipoyl]-L-lysyl-[protein] + CO2. Its activity is regulated as follows. E1 activity is regulated by phosphorylation (inactivation) and dephosphorylation (activation) of the alpha subunit. The pyruvate dehydrogenase complex catalyzes the overall conversion of pyruvate to acetyl-CoA and CO(2). It contains multiple copies of three enzymatic components: pyruvate dehydrogenase (E1), dihydrolipoamide acetyltransferase (E2) and lipoamide dehydrogenase (E3). The sequence is that of Pyruvate dehydrogenase E1 component subunit alpha, mitochondrial (pdhA) from Dictyostelium discoideum (Social amoeba).